The chain runs to 227 residues: Cytochrome c oxidase subunit 2 (227 aa).

Residues M1–S14 are Mitochondrial intermembrane-facing. Residues P15–M45 traverse the membrane as a helical segment. At L46–Q58 the chain is on the mitochondrial matrix side. A helical membrane pass occupies residues E59–M86. Over D87 to S227 the chain is Mitochondrial intermembrane. The Cu cation site is built by H160, C195, E197, C199, H203, and M206. E197 lines the Mg(2+) pocket.

The protein belongs to the cytochrome c oxidase subunit 2 family. As to quaternary structure, component of the cytochrome c oxidase (complex IV, CIV), a multisubunit enzyme composed of 14 subunits. The complex is composed of a catalytic core of 3 subunits MT-CO1, MT-CO2 and MT-CO3, encoded in the mitochondrial DNA, and 11 supernumerary subunits COX4I, COX5A, COX5B, COX6A, COX6B, COX6C, COX7A, COX7B, COX7C, COX8 and NDUFA4, which are encoded in the nuclear genome. The complex exists as a monomer or a dimer and forms supercomplexes (SCs) in the inner mitochondrial membrane with NADH-ubiquinone oxidoreductase (complex I, CI) and ubiquinol-cytochrome c oxidoreductase (cytochrome b-c1 complex, complex III, CIII), resulting in different assemblies (supercomplex SCI(1)III(2)IV(1) and megacomplex MCI(2)III(2)IV(2)). Found in a complex with TMEM177, COA6, COX18, COX20, SCO1 and SCO2. Interacts with TMEM177 in a COX20-dependent manner. Interacts with COX20. Interacts with COX16. The cofactor is Cu cation.

It localises to the mitochondrion inner membrane. It catalyses the reaction 4 Fe(II)-[cytochrome c] + O2 + 8 H(+)(in) = 4 Fe(III)-[cytochrome c] + 2 H2O + 4 H(+)(out). Functionally, component of the cytochrome c oxidase, the last enzyme in the mitochondrial electron transport chain which drives oxidative phosphorylation. The respiratory chain contains 3 multisubunit complexes succinate dehydrogenase (complex II, CII), ubiquinol-cytochrome c oxidoreductase (cytochrome b-c1 complex, complex III, CIII) and cytochrome c oxidase (complex IV, CIV), that cooperate to transfer electrons derived from NADH and succinate to molecular oxygen, creating an electrochemical gradient over the inner membrane that drives transmembrane transport and the ATP synthase. Cytochrome c oxidase is the component of the respiratory chain that catalyzes the reduction of oxygen to water. Electrons originating from reduced cytochrome c in the intermembrane space (IMS) are transferred via the dinuclear copper A center (CU(A)) of subunit 2 and heme A of subunit 1 to the active site in subunit 1, a binuclear center (BNC) formed by heme A3 and copper B (CU(B)). The BNC reduces molecular oxygen to 2 water molecules using 4 electrons from cytochrome c in the IMS and 4 protons from the mitochondrial matrix. This Coturnix japonica (Japanese quail) protein is Cytochrome c oxidase subunit 2 (MT-CO2).